A 203-amino-acid polypeptide reads, in one-letter code: Thymidylate kinase (203 aa).

14 to 21 (GGEGIGKS) contributes to the ATP binding site.

This sequence belongs to the thymidylate kinase family.

It carries out the reaction dTMP + ATP = dTDP + ADP. In terms of biological role, phosphorylation of dTMP to form dTDP in both de novo and salvage pathways of dTTP synthesis. This chain is Thymidylate kinase, found in Rickettsia peacockii (strain Rustic).